Reading from the N-terminus, the 381-residue chain is Alkanesulfonate monooxygenase (381 aa).

The protein belongs to the SsuD family. Homotetramer.

It carries out the reaction an alkanesulfonate + FMNH2 + O2 = an aldehyde + FMN + sulfite + H2O + 2 H(+). Its function is as follows. Catalyzes the desulfonation of aliphatic sulfonates. In Escherichia coli (strain SMS-3-5 / SECEC), this protein is Alkanesulfonate monooxygenase.